Consider the following 414-residue polypeptide: Multifunctional CCA protein (414 aa).

ATP contacts are provided by glycine 8 and arginine 11. CTP contacts are provided by glycine 8 and arginine 11. Residues aspartate 21 and aspartate 23 each contribute to the Mg(2+) site. 3 residues coordinate ATP: arginine 91, arginine 137, and arginine 140. CTP-binding residues include arginine 91, arginine 137, and arginine 140. An HD domain is found at 228-329; the sequence is TGIHTLMVLE…VKLFDKGDFW (102 aa).

This sequence belongs to the tRNA nucleotidyltransferase/poly(A) polymerase family. Bacterial CCA-adding enzyme type 1 subfamily. In terms of assembly, monomer. Can also form homodimers and oligomers. It depends on Mg(2+) as a cofactor. Ni(2+) serves as cofactor.

The enzyme catalyses a tRNA precursor + 2 CTP + ATP = a tRNA with a 3' CCA end + 3 diphosphate. It catalyses the reaction a tRNA with a 3' CCA end + 2 CTP + ATP = a tRNA with a 3' CCACCA end + 3 diphosphate. In terms of biological role, catalyzes the addition and repair of the essential 3'-terminal CCA sequence in tRNAs without using a nucleic acid template. Adds these three nucleotides in the order of C, C, and A to the tRNA nucleotide-73, using CTP and ATP as substrates and producing inorganic pyrophosphate. tRNA 3'-terminal CCA addition is required both for tRNA processing and repair. Also involved in tRNA surveillance by mediating tandem CCA addition to generate a CCACCA at the 3' terminus of unstable tRNAs. While stable tRNAs receive only 3'-terminal CCA, unstable tRNAs are marked with CCACCA and rapidly degraded. This Shewanella frigidimarina (strain NCIMB 400) protein is Multifunctional CCA protein.